The sequence spans 451 residues: Signal transduction histidine-protein kinase ArlS (451 aa).

The next 2 membrane-spanning stretches (helical) occupy residues 11-31 and 156-176; these read IIVTTMITFVTIFLFCLIIIF and IIALAFGVIATIITATISYVF. The HAMP domain occupies 178-231; that stretch reads TQITKPLVSLSNKMIEIRRDGFQNKLQLNTNYEEIDNLANTFNEMMSQIEESFN. Residues 239–451 form the Histidine kinase domain; that stretch reads DASHELRTPL…NKGTTFKIIF (213 aa). Phosphohistidine; by autocatalysis is present on histidine 242.

In terms of processing, autophosphorylated.

It is found in the cell membrane. It catalyses the reaction ATP + protein L-histidine = ADP + protein N-phospho-L-histidine.. Functionally, member of the two-component regulatory system ArlS/ArlR involved in the regulation of adhesion, autolysis, multidrug resistance and virulence. ArlS probably functions as a sensor protein kinase which is autophosphorylated at a histidine residue and transfers its phosphate group to ArlR. This is Signal transduction histidine-protein kinase ArlS (arlS) from Staphylococcus aureus (strain MRSA252).